The primary structure comprises 257 residues: Phosphonates import ATP-binding protein PhnC (257 aa).

An ABC transporter domain is found at 4 to 248 (IEFKDVRKVY…AFNEIYGRSI (245 aa)). 37–44 (GLSGSGKS) provides a ligand contact to ATP.

This sequence belongs to the ABC transporter superfamily. Phosphonates importer (TC 3.A.1.9.1) family. As to quaternary structure, the complex is composed of two ATP-binding proteins (PhnC), two transmembrane proteins (PhnE) and a solute-binding protein (PhnD).

It localises to the cell membrane. It catalyses the reaction phosphonate(out) + ATP + H2O = phosphonate(in) + ADP + phosphate + H(+). Part of the ABC transporter complex PhnCDE involved in phosphonates import. Responsible for energy coupling to the transport system. In Staphylococcus saprophyticus subsp. saprophyticus (strain ATCC 15305 / DSM 20229 / NCIMB 8711 / NCTC 7292 / S-41), this protein is Phosphonates import ATP-binding protein PhnC.